The following is a 693-amino-acid chain: C6 finger domain transcription factor nscR (693 aa).

The zn(2)-C6 fungal-type DNA-binding region spans 17 to 43 (CELCRERKVKCDKLDPCTNCSSAGVIC). A disordered region spans residues 589–608 (AANTLSVPHTPPSRSSITSS).

The protein localises to the nucleus. In terms of biological role, transcription factor that specifically regulates the neosartoricin B biosynthesis gene cluster. The sequence is that of C6 finger domain transcription factor nscR from Trichophyton rubrum (strain ATCC MYA-4607 / CBS 118892) (Athlete's foot fungus).